Consider the following 360-residue polypeptide: Phospho-N-acetylmuramoyl-pentapeptide-transferase (360 aa).

A run of 10 helical transmembrane segments spans residues 21–41 (YVTF…LWWG), 74–94 (MGGL…GDLG), 97–117 (YVWV…IDDY), 134–154 (YILQ…SAGS), 168–188 (VMPQ…VGSS), 199–219 (GLAI…AYLS), 236–256 (SGEL…FLWF), 263–283 (VFMG…IAVL), 288–308 (ILLV…ILQV), and 338–358 (VIVR…ATLK).

The protein belongs to the glycosyltransferase 4 family. MraY subfamily. Mg(2+) is required as a cofactor.

The protein localises to the cell inner membrane. The catalysed reaction is UDP-N-acetyl-alpha-D-muramoyl-L-alanyl-gamma-D-glutamyl-meso-2,6-diaminopimeloyl-D-alanyl-D-alanine + di-trans,octa-cis-undecaprenyl phosphate = di-trans,octa-cis-undecaprenyl diphospho-N-acetyl-alpha-D-muramoyl-L-alanyl-D-glutamyl-meso-2,6-diaminopimeloyl-D-alanyl-D-alanine + UMP. It functions in the pathway cell wall biogenesis; peptidoglycan biosynthesis. Catalyzes the initial step of the lipid cycle reactions in the biosynthesis of the cell wall peptidoglycan: transfers peptidoglycan precursor phospho-MurNAc-pentapeptide from UDP-MurNAc-pentapeptide onto the lipid carrier undecaprenyl phosphate, yielding undecaprenyl-pyrophosphoryl-MurNAc-pentapeptide, known as lipid I. This chain is Phospho-N-acetylmuramoyl-pentapeptide-transferase, found in Shewanella loihica (strain ATCC BAA-1088 / PV-4).